Consider the following 442-residue polypeptide: C4-dicarboxylate transport protein (442 aa).

8 consecutive transmembrane segments (helical) span residues 10–30 (VQVLIAIALGILTGFLFPSLG), 40–60 (FIKLIKMIIAPIIFATVVSGI), 77–97 (LLYFELVTTFALVIGLVIVNI), 144–164 (FTQGDLLQVLLVAVLFGFALL), 183–203 (VIFVILGFVMRLAPIGAFGAM), 221–241 (LMITFYATCALFIFGVLGLIA), 331–351 (LLGVLLLTSKGAAGVTGSGFI), and 354–374 (AATLSAVGDVPVAGLALILGI). The disordered stretch occupies residues 418–442 (LPTIEPDVHSEERGEGRELDSLRPA). The span at 423–442 (PDVHSEERGEGRELDSLRPA) shows a compositional bias: basic and acidic residues.

The protein belongs to the dicarboxylate/amino acid:cation symporter (DAACS) (TC 2.A.23) family.

The protein localises to the cell membrane. Its function is as follows. Responsible for the transport of dicarboxylates such as succinate, fumarate, and malate across the membrane. The polypeptide is C4-dicarboxylate transport protein (Deinococcus deserti (strain DSM 17065 / CIP 109153 / LMG 22923 / VCD115)).